A 468-amino-acid chain; its full sequence is 6-phospho-beta-galactosidase (468 aa).

Gln-19, His-116, Asn-159, Glu-160, and Asn-297 together coordinate D-galactose 6-phosphate. Glu-160 functions as the Proton donor in the catalytic mechanism. Glu-375 serves as the catalytic Nucleophile. Ser-428, Trp-429, Lys-435, and Tyr-437 together coordinate D-galactose 6-phosphate.

It belongs to the glycosyl hydrolase 1 family.

It catalyses the reaction a 6-phospho-beta-D-galactoside + H2O = D-galactose 6-phosphate + an alcohol. The protein operates within carbohydrate metabolism; lactose degradation; D-galactose 6-phosphate and beta-D-glucose from lactose 6-phosphate: step 1/1. The sequence is that of 6-phospho-beta-galactosidase from Streptococcus pyogenes serotype M12 (strain MGAS2096).